We begin with the raw amino-acid sequence, 129 residues long: uncharacterized protein (129 aa).

Residues 33 to 50 traverse the membrane as a helical segment; it reads MGGNVMWFIALLFALLIA.

The protein localises to the membrane. This is an uncharacterized protein from Saccharomyces cerevisiae (strain ATCC 204508 / S288c) (Baker's yeast).